Here is a 392-residue protein sequence, read N- to C-terminus: Dual-specificity RNA methyltransferase RlmN (392 aa).

The Proton acceptor role is filled by E116. One can recognise a Radical SAM core domain in the interval 122 to 364 (EEGRGTLCVS…SPIRTPRGED (243 aa)). A disulfide bridge links C129 with C369. [4Fe-4S] cluster contacts are provided by C136, C140, and C143. Residues 195–196 (GE), S227, 249–251 (SFH), and N326 each bind S-adenosyl-L-methionine. Residue C369 is the S-methylcysteine intermediate of the active site.

The protein belongs to the radical SAM superfamily. RlmN family. It depends on [4Fe-4S] cluster as a cofactor.

The protein localises to the cytoplasm. The enzyme catalyses adenosine(2503) in 23S rRNA + 2 reduced [2Fe-2S]-[ferredoxin] + 2 S-adenosyl-L-methionine = 2-methyladenosine(2503) in 23S rRNA + 5'-deoxyadenosine + L-methionine + 2 oxidized [2Fe-2S]-[ferredoxin] + S-adenosyl-L-homocysteine. It catalyses the reaction adenosine(37) in tRNA + 2 reduced [2Fe-2S]-[ferredoxin] + 2 S-adenosyl-L-methionine = 2-methyladenosine(37) in tRNA + 5'-deoxyadenosine + L-methionine + 2 oxidized [2Fe-2S]-[ferredoxin] + S-adenosyl-L-homocysteine. In terms of biological role, specifically methylates position 2 of adenine 2503 in 23S rRNA and position 2 of adenine 37 in tRNAs. m2A2503 modification seems to play a crucial role in the proofreading step occurring at the peptidyl transferase center and thus would serve to optimize ribosomal fidelity. The polypeptide is Dual-specificity RNA methyltransferase RlmN (Cereibacter sphaeroides (strain ATCC 17025 / ATH 2.4.3) (Rhodobacter sphaeroides)).